The primary structure comprises 338 residues: Short-chain dehydrogenase/reductase phmF (338 aa).

NADP(+) is bound by residues Leu-46, Arg-71, Asp-96, and Asn-123. The active-site Proton donor is the Ser-177. Residues Tyr-211 and Lys-215 each contribute to the NADP(+) site. Tyr-211 functions as the Proton acceptor in the catalytic mechanism. The active-site Lowers pKa of active site Tyr is the Lys-215.

The protein belongs to the short-chain dehydrogenases/reductases (SDR) family.

Its pathway is mycotoxin biosynthesis. Functionally, short-chain dehydrogenase/reductase; part of the gene cluster that mediates the biosynthesis of the mycotoxins phomacins, leucine-derived cytochalasans with potent actin polymerization-inhibitory activities and monocot-specific antigerminative activities. The first step in the pathway is catalyzed by the hybrid PKS-NRPS phmA, assisted by the enoyl reductase phmE, that are responsible for fusion of the leucine precursor and the polyketide backbone to produce a 2-pyrrolidone intermediate. The polyketide synthase module (PKS) of phmA is responsible for the synthesis of the polyketide backbone and the downstream nonribosomal peptide synthetase (NRPS) amidates the carboxyl end of the polyketide with the leucine precursor. Because phmA lacks a designated enoylreductase (ER) domain, the required activity is provided the enoyl reductase phmE. Reduction by the hydrolyase phmG, followed by dehydration and intra-molecular Diels-Alder cyclization by the Diels-Alderase phmD then yield the required isoindolone-fused macrocycle. A number of oxidative steps catalyzed by the tailoring cytochrome P450 monooxygenase phmB, the FAD-linked oxidoreductase phmC and the short-chain dehydrogenase/reductase phmF, are further required to afford the final products, phomacin D and phomacin E. The protein is Short-chain dehydrogenase/reductase phmF of Phaeosphaeria nodorum (strain SN15 / ATCC MYA-4574 / FGSC 10173) (Glume blotch fungus).